Reading from the N-terminus, the 496-residue chain is Genome polyprotein (496 aa).

Residues 1 to 447 are Extracellular-facing; that stretch reads SRCTHLENRD…HTVLGGAFNS (447 aa). 6 disulfides stabilise this stretch: C3–C30, C60–C116, C60–C121, C74–C105, C92–C116, and C92–C121. Positions 98–111 are fusion peptide; it reads DRGWGNHCGLFGKG. N-linked (GlcNAc...) asparagine; by host glycosylation occurs at N154. Cystine bridges form between C186/C290 and C307/C338. A helical membrane pass occupies residues 448–468; the sequence is IFGGVGFLPKLLMGVALAWLG. Residues 469 to 479 lie on the Cytoplasmic side of the membrane; the sequence is LNTRNPTMSIS. Residues 480-496 form a helical membrane-spanning segment; it reads FLLTGGLVLAMTLGVGA.

As to quaternary structure, homodimer; in the endoplasmic reticulum and Golgi. Post-translationally, N-glycosylated.

It localises to the virion membrane. The protein localises to the host endoplasmic reticulum membrane. In terms of biological role, binds to host cell surface receptor and mediates fusion between viral and cellular membranes. Envelope protein is synthesized in the endoplasmic reticulum in the form of heterodimer with protein prM. They play a role in virion budding in the ER, and the newly formed immature particle is covered with 60 spikes composed of heterodimer between precursor prM and envelope protein E. The virion is transported to the Golgi apparatus where the low pH causes dissociation of PrM-E heterodimers and formation of E homodimers. prM-E cleavage is ineficient, and many virions are only partially matured. These uncleaved prM would play a role in immune evasion. In Louping ill virus (strain SB 526) (Li), this protein is Genome polyprotein.